Here is a 173-residue protein sequence, read N- to C-terminus: Probable WRKY transcription factor 50 (173 aa).

The WRKY DNA-binding region spans 107-172 (SEVEVLDDGF…YEGSHNHSSM (66 aa)).

It belongs to the WRKY group II-c family.

It is found in the nucleus. In terms of biological role, transcription factor. Interacts specifically with the W box (5'-(T)TGAC[CT]-3'), a frequently occurring elicitor-responsive cis-acting element. The protein is Probable WRKY transcription factor 50 (WRKY50) of Arabidopsis thaliana (Mouse-ear cress).